A 218-amino-acid chain; its full sequence is MSSQQQESEASGYNTSASSEFGSLEDSHQFVSPVTRHASKRRAVENVDHLDELMKSSMVLSPEKRLRLNTSNDSNLVRNTARSPDSSMNGRPQTRRSTSSDIEISPRVRAMRSTSGSSMDLVRTVSSFCTDSISPKFFTNHGSTTRKRTENGSIYSRHRLGATFSPLVAGAKRKMATPSQSLKRQEKQSPLESRHGGLRSRGTPQRKLLLCDRLKVLN.

2 stretches are compositionally biased toward polar residues: residues 1 to 21 (MSSQ…SSEF) and 68 to 102 (LNTS…SSDI). Disordered stretches follow at residues 1–39 (MSSQ…RHAS), 63–116 (EKRL…STSG), and 170–205 (GAKR…GTPQ). Basic and acidic residues predominate over residues 183–195 (KRQEKQSPLESRH).

This is an uncharacterized protein from Caenorhabditis elegans.